The chain runs to 743 residues: Type VI secretion system spike protein VgrG1 (743 aa).

The protein belongs to the VgrG protein family.

It localises to the secreted. It carries out the reaction L-arginyl-[protein] + NAD(+) = N(omega)-(ADP-D-ribosyl)-L-arginyl-[protein] + nicotinamide + H(+). Part of the type VI secretion system specialized secretion system, which delivers several virulence factors in both prokaryotic and eukaryotic cells during infection. Acts directly as an secreted effector with an actin ADP-ribosyltransferase activity that disrupts the host actin cytoskeleton, leading to a decrease in host cell viability and an increase in apoptosis. This is Type VI secretion system spike protein VgrG1 (vgrG1) from Aeromonas hydrophila subsp. hydrophila (strain ATCC 7966 / DSM 30187 / BCRC 13018 / CCUG 14551 / JCM 1027 / KCTC 2358 / NCIMB 9240 / NCTC 8049).